The following is a 659-amino-acid chain: 1,4-alpha-glucan branching enzyme GlgB (659 aa).

A compositionally biased stretch (basic and acidic residues) spans 1-12 (MRNCKELKHEKN). The segment at 1 to 25 (MRNCKELKHEKNGNVTEKIGKNKGK) is disordered. The active-site Nucleophile is the aspartate 337. The active-site Proton donor is glutamate 390.

This sequence belongs to the glycosyl hydrolase 13 family. GlgB subfamily. Monomer.

The catalysed reaction is Transfers a segment of a (1-&gt;4)-alpha-D-glucan chain to a primary hydroxy group in a similar glucan chain.. It functions in the pathway glycan biosynthesis; glycogen biosynthesis. Functionally, catalyzes the formation of the alpha-1,6-glucosidic linkages in glycogen by scission of a 1,4-alpha-linked oligosaccharide from growing alpha-1,4-glucan chains and the subsequent attachment of the oligosaccharide to the alpha-1,6 position. In Clostridium perfringens (strain ATCC 13124 / DSM 756 / JCM 1290 / NCIMB 6125 / NCTC 8237 / Type A), this protein is 1,4-alpha-glucan branching enzyme GlgB.